Here is a 427-residue protein sequence, read N- to C-terminus: Glutamate-1-semialdehyde 2,1-aminomutase (427 aa).

Lysine 265 is subject to N6-(pyridoxal phosphate)lysine.

It belongs to the class-III pyridoxal-phosphate-dependent aminotransferase family. HemL subfamily. As to quaternary structure, homodimer. Requires pyridoxal 5'-phosphate as cofactor.

The protein resides in the cytoplasm. It catalyses the reaction (S)-4-amino-5-oxopentanoate = 5-aminolevulinate. It participates in porphyrin-containing compound metabolism; protoporphyrin-IX biosynthesis; 5-aminolevulinate from L-glutamyl-tRNA(Glu): step 2/2. This chain is Glutamate-1-semialdehyde 2,1-aminomutase, found in Pseudomonas putida (strain ATCC 47054 / DSM 6125 / CFBP 8728 / NCIMB 11950 / KT2440).